The primary structure comprises 299 residues: MANFPASLLILNGKSADNQPLREAITLLRDEGIQIHVRVTWEKGDAQRYVDEARRLGVETVIAGGGDGTINEVSTALILIRDGVAPALGLLPLGTANDFATSAGIPEALDKALKLAIAGNAMEIDMARVNDKTCFINMATGGFGTRITTETPEKLKAALGGVSYLIHGLMRMDTLTPDRCEIRGENFHWQGDALVIGIGNGRQAGGGQQLCPTALINDGLLQLRIFTGEELLPALFSTLTQSDDNPNIIDGASAWFDIHAPHEITFNLDGEPLSGQEFHIEVLPGALRCRLPPDCPLLR.

In terms of domain architecture, DAGKc spans 2–133 (ANFPASLLIL…IDMARVNDKT (132 aa)). ATP is bound by residues threonine 40, 66-72 (GDGTINE), and threonine 95. Mg(2+)-binding residues include leucine 215, aspartate 218, and leucine 220. Glutamate 271 serves as the catalytic Proton acceptor.

This sequence belongs to the diacylglycerol/lipid kinase family. YegS lipid kinase subfamily. It depends on Mg(2+) as a cofactor. Ca(2+) serves as cofactor.

Its subcellular location is the cytoplasm. Its function is as follows. Probably phosphorylates lipids; the in vivo substrate is unknown. The polypeptide is Probable lipid kinase YegS (Salmonella newport (strain SL254)).